The sequence spans 418 residues: NADH-quinone oxidoreductase subunit D (418 aa).

Belongs to the complex I 49 kDa subunit family. As to quaternary structure, NDH-1 is composed of 14 different subunits. Subunits NuoB, C, D, E, F, and G constitute the peripheral sector of the complex.

The protein localises to the cell inner membrane. The enzyme catalyses a quinone + NADH + 5 H(+)(in) = a quinol + NAD(+) + 4 H(+)(out). NDH-1 shuttles electrons from NADH, via FMN and iron-sulfur (Fe-S) centers, to quinones in the respiratory chain. The immediate electron acceptor for the enzyme in this species is believed to be ubiquinone. Couples the redox reaction to proton translocation (for every two electrons transferred, four hydrogen ions are translocated across the cytoplasmic membrane), and thus conserves the redox energy in a proton gradient. The sequence is that of NADH-quinone oxidoreductase subunit D from Neisseria gonorrhoeae (strain ATCC 700825 / FA 1090).